A 949-amino-acid chain; its full sequence is Bifunctional uridylyltransferase/uridylyl-removing enzyme (949 aa).

Residues 1–377 (MARHETSFPE…RFRNRVRKIP (377 aa)) form a uridylyltransferase region. The interval 378 to 733 (GTLDFVDDGG…VRTHDFHAIT (356 aa)) is uridylyl-removing. The HD domain maps to 494-610 (VDEHLLRAVD…VDFAERVQSL (117 aa)). ACT domains are found at residues 734 to 815 (EITV…DVIA) and 845 to 926 (VIEV…ERMP). Positions 925 to 949 (MPSGIIAPTPVPRASHGSKATKAET) are disordered.

This sequence belongs to the GlnD family. Mg(2+) serves as cofactor.

The enzyme catalyses [protein-PII]-L-tyrosine + UTP = [protein-PII]-uridylyl-L-tyrosine + diphosphate. It carries out the reaction [protein-PII]-uridylyl-L-tyrosine + H2O = [protein-PII]-L-tyrosine + UMP + H(+). With respect to regulation, uridylyltransferase (UTase) activity is inhibited by glutamine, while glutamine activates uridylyl-removing (UR) activity. Its function is as follows. Modifies, by uridylylation and deuridylylation, the PII regulatory proteins (GlnB and homologs), in response to the nitrogen status of the cell that GlnD senses through the glutamine level. Under low glutamine levels, catalyzes the conversion of the PII proteins and UTP to PII-UMP and PPi, while under higher glutamine levels, GlnD hydrolyzes PII-UMP to PII and UMP (deuridylylation). Thus, controls uridylylation state and activity of the PII proteins, and plays an important role in the regulation of nitrogen fixation and metabolism. The sequence is that of Bifunctional uridylyltransferase/uridylyl-removing enzyme from Sinorhizobium medicae (strain WSM419) (Ensifer medicae).